The sequence spans 597 residues: Protein kinase C-like 3 (597 aa).

A PB1 domain is found at 12–95; that stretch reads DIKLKTRFHG…AELNIHVFVG (84 aa). Residues 127-177 form a Phorbol-ester/DAG-type zinc finger; that stretch reads GHRFQGKRLNRRIQCFICHDYIWGIGRQGFRCVDCRLCVHKKCHRHVRTHC. The segment at 181-238 is disordered; sequence PQGPNVPVAPSSGVGSLRGGRLDTSSSTTRSGGGIDNGAFHEHEIESPGSAKDMSRST. The Protein kinase domain occupies 253 to 522; the sequence is FRLLTVIGRG…LNDMKEHDFF (270 aa). ATP is bound by residues 259 to 267 and lysine 282; that span reads IGRGSYAKV. The active-site Proton acceptor is the aspartate 377. The AGC-kinase C-terminal domain occupies 524 to 595; the sequence is GFIDWEALEQ…VNPLQMSRED (72 aa).

This sequence belongs to the protein kinase superfamily. AGC Ser/Thr protein kinase family. PKC subfamily. Interaction with par-3 required for the peripheral localization of par-6 and to form a par-3/par-6/pkc-3 complex, which is activated when cdc-42 interacts with par-6. Binds avidly to the phosphotyrosine interaction domain (PID) of a novel pkc-3 adapter protein num-1, which enables tethering and targeting of pkc-3 to the cell periphery. Mg(2+) is required as a cofactor.

The protein localises to the cytoplasm. It localises to the cytoskeleton. The enzyme catalyses L-seryl-[protein] + ATP = O-phospho-L-seryl-[protein] + ADP + H(+). It catalyses the reaction L-threonyl-[protein] + ATP = O-phospho-L-threonyl-[protein] + ADP + H(+). Its function is as follows. Required for the normal progression of embryogenesis and viability of the organism. Plays an indispensable role in establishing embryonic polarity and in recruiting and maintaining par-6 to the periphery, through interaction with par-3. Required for epithelial cell polarity in the distal spermatheca. Phosphorylates serine residues of num-1. Required for the expression of antimicrobial peptide nlp-29 in response in response to fungal infection or physical injury. This Caenorhabditis briggsae protein is Protein kinase C-like 3.